A 433-amino-acid chain; its full sequence is Histone acetyltransferase type B subunit 2 (433 aa).

WD repeat units follow at residues 131–171 (EHPG…LDPT), 184–224 (GHEA…ADSR), 234–274 (HHTQ…TNKA), 281–321 (GHLD…EKVH), and 325–365 (GHND…EEQL). The segment at 367 to 371 (DDQDD) is interaction with the histone H4 N-terminus. The stretch at 382-422 (GHTNHLADFSWNPNEPWLVASAAEDNLLQIWKVAESIVGKD) is one WD 6 repeat.

This sequence belongs to the WD repeat RBAP46/RBAP48/MSI1 family. In terms of assembly, component of the HAT-B complex composed of at least HAT1 and HAT2. The HAT-B complex binds to histone H4 tail.

It is found in the cytoplasm. It localises to the nucleus. Regulatory subunit of the histone acetylase B (HAT-B) complex. The complex acetylates 'Lys-12' of histone H4 which is required for telomeric silencing. In Gibberella zeae (strain ATCC MYA-4620 / CBS 123657 / FGSC 9075 / NRRL 31084 / PH-1) (Wheat head blight fungus), this protein is Histone acetyltransferase type B subunit 2 (HAT2).